The chain runs to 284 residues: Protein phosphatase 1 regulatory subunit 3B (284 aa).

The short motif at 61-64 is the PP1-binding motif element; sequence RVSF. In terms of domain architecture, CBM21 spans 124–232; it reads RNRLQTDHVC…SNKGKNYRII (109 aa). Position 260 is a phosphoserine (serine 260).

In terms of assembly, interacts with glycogen, PPP1CC catalytic subunit of PP1 and PYGL. Associates with glycogen particles. Forms complexes with debranching enzyme, glycogen phosphorylase, glycogen synthase and phosphorylase kinase which is necessary for its regulation of PP1 activity.

In terms of biological role, acts as a glycogen-targeting subunit for phosphatase PP1. Facilitates interaction of the PP1 with enzymes of the glycogen metabolism and regulates its activity. Suppresses the rate at which PP1 dephosphorylates (inactivates) glycogen phosphorylase and enhances the rate at which it activates glycogen synthase and therefore limits glycogen breakdown. Its activity is inhibited by PYGL, resulting in inhibition of the glycogen synthase and glycogen phosphorylase phosphatase activities of PP1. Dramatically increases basal and insulin-stimulated glycogen synthesis upon overexpression in hepatocytes. In Bos taurus (Bovine), this protein is Protein phosphatase 1 regulatory subunit 3B (PPP1R3B).